The chain runs to 470 residues: Zinc finger and BTB domain-containing protein 8A.1-A (470 aa).

The BTB domain occupies 24-92 (CDCHIIVEGQ…VYSGKLPLSG (69 aa)). The interval 260 to 280 (EDEDAASHSWPESPQQESLDQ) is disordered. The segment covering 269 to 278 (WPESPQQESL) has biased composition (polar residues). 2 consecutive C2H2-type zinc fingers follow at residues 316 to 338 (FKCP…LRCH) and 344 to 367 (YPCE…QTIH). Over residues 439 to 450 (GRKENGSERAES) the composition is skewed to basic and acidic residues. The segment at 439–470 (GRKENGSERAESDLAIQEVVDSEDDELKEKQD) is disordered.

Its subcellular location is the nucleus. Functionally, may be involved in transcriptional regulation. This is Zinc finger and BTB domain-containing protein 8A.1-A (zbtb8a.1-a) from Xenopus laevis (African clawed frog).